The chain runs to 432 residues: 3-phosphoshikimate 1-carboxyvinyltransferase (432 aa).

Lysine 23, serine 24, and arginine 28 together coordinate 3-phosphoshikimate. Lysine 23 provides a ligand contact to phosphoenolpyruvate. Positions 95 and 123 each coordinate phosphoenolpyruvate. 3-phosphoshikimate contacts are provided by serine 167, glutamine 169, aspartate 317, and lysine 344. Glutamine 169 contributes to the phosphoenolpyruvate binding site. Aspartate 317 serves as the catalytic Proton acceptor. Residues arginine 348 and arginine 390 each contribute to the phosphoenolpyruvate site.

This sequence belongs to the EPSP synthase family. In terms of assembly, monomer.

It localises to the cytoplasm. It carries out the reaction 3-phosphoshikimate + phosphoenolpyruvate = 5-O-(1-carboxyvinyl)-3-phosphoshikimate + phosphate. The protein operates within metabolic intermediate biosynthesis; chorismate biosynthesis; chorismate from D-erythrose 4-phosphate and phosphoenolpyruvate: step 6/7. Functionally, catalyzes the transfer of the enolpyruvyl moiety of phosphoenolpyruvate (PEP) to the 5-hydroxyl of shikimate-3-phosphate (S3P) to produce enolpyruvyl shikimate-3-phosphate and inorganic phosphate. This chain is 3-phosphoshikimate 1-carboxyvinyltransferase, found in Staphylococcus aureus (strain Newman).